The primary structure comprises 266 residues: Putative carbamate hydrolase RutD (266 aa).

The protein belongs to the AB hydrolase superfamily. Hydrolase RutD family.

It carries out the reaction carbamate + 2 H(+) = NH4(+) + CO2. In terms of biological role, involved in pyrimidine catabolism. May facilitate the hydrolysis of carbamate, a reaction that can also occur spontaneously. This is Putative carbamate hydrolase RutD from Escherichia coli (strain B / BL21-DE3).